Reading from the N-terminus, the 309-residue chain is Peptidyl-prolyl cis-trans isomerase 9 (309 aa).

The PPIase cyclophilin-type domain maps to 8 to 173 (FLDISVDENL…AKVLISNCGE (166 aa)). Basic and acidic residues-rich tracts occupy residues 217 to 229 (NEKK…DKRR), 239 to 265 (RSHE…RDEN), 280 to 289 (ERSATPEHWR), and 296 to 309 (WVHD…EDLV). Residues 217–309 (NEKKHEMRND…SHKHPEEDLV (93 aa)) are disordered.

It belongs to the cyclophilin-type PPIase family. In terms of tissue distribution, co-expressed with pdi-1 in the syncytial hypodermis.

The enzyme catalyses [protein]-peptidylproline (omega=180) = [protein]-peptidylproline (omega=0). Functionally, PPIases accelerate the folding of proteins. It catalyzes the cis-trans isomerization of proline imidic peptide bonds in oligopeptides. Thought to function as a catalyst in the folding and modification of cuticle collagens. This Caenorhabditis elegans protein is Peptidyl-prolyl cis-trans isomerase 9 (cyn-9).